Reading from the N-terminus, the 1005-residue chain is Espin-like protein (1005 aa).

ANK repeat units lie at residues 1–31, 35–64, 69–99, 103–132, 136–166, 170–200, 204–234, 238–267, 270–299, and 303–332; these read MEAQ…RPDI, LGAG…LPGN, NGAT…GLQD, SGVS…AATL, EGAL…GVNQ, SGAS…DVRL, DGMS…GLTA, EGAT…PIMR, WGGT…DPFL, and DGYT…PVRV. 2 disordered regions span residues 355–383 and 458–480; these read EERR…VPRE and ADHP…AAEQ. The span at 458 to 469 shows a compositional bias: basic and acidic residues; sequence ADHPPEDQDQSQ. A coiled-coil region spans residues 502 to 539; sequence EDDLVYLEKQINDLQLRRRCQEYESELGRLAAQLQALL. Disordered stretches follow at residues 611–643, 692–729, 764–794, and 951–975; these read LAQG…QREI, PRGD…GPGL, LEAQ…PRLG, and PHAS…SQGS.

Interacts with MYO3A (via C-terminus). Interacts with MYO3B (via C-terminus). Expressed in inner ear hair cells. Expressed in utricle hair bundles (at protein level). Expressed in choclea (at protein level).

It localises to the cell projection. Its subcellular location is the stereocilium. Its function is as follows. Binds to but does not cross-link actin. Required for the formation and maintenance of inner ear hair cell stereocilia and staircase formation. Essential for normal hearing. The protein is Espin-like protein (Espnl) of Mus musculus (Mouse).